We begin with the raw amino-acid sequence, 257 residues long: Acetylglutamate kinase (257 aa).

Residues 41-42 (GG), Arg-63, and Asn-155 contribute to the substrate site.

The protein belongs to the acetylglutamate kinase family. ArgB subfamily.

Its subcellular location is the cytoplasm. The catalysed reaction is N-acetyl-L-glutamate + ATP = N-acetyl-L-glutamyl 5-phosphate + ADP. The protein operates within amino-acid biosynthesis; L-arginine biosynthesis; N(2)-acetyl-L-ornithine from L-glutamate: step 2/4. Catalyzes the ATP-dependent phosphorylation of N-acetyl-L-glutamate. This Solibacter usitatus (strain Ellin6076) protein is Acetylglutamate kinase.